A 259-amino-acid chain; its full sequence is Pimeloyl-[acyl-carrier protein] methyl ester esterase (259 aa).

In terms of domain architecture, AB hydrolase-1 spans 16–244 (LVFIHGWGLN…ASHAPFLSHP (229 aa)). Residues Trp-22, 82–83 (SL), and 143–147 (FFNIQ) contribute to the substrate site. Ser-82 acts as the Nucleophile in catalysis. Catalysis depends on residues Asp-207 and His-237. His-237 serves as a coordination point for substrate.

This sequence belongs to the AB hydrolase superfamily. Carboxylesterase BioH family. In terms of assembly, monomer.

It localises to the cytoplasm. The catalysed reaction is 6-carboxyhexanoyl-[ACP] methyl ester + H2O = 6-carboxyhexanoyl-[ACP] + methanol + H(+). Its pathway is cofactor biosynthesis; biotin biosynthesis. Functionally, the physiological role of BioH is to remove the methyl group introduced by BioC when the pimeloyl moiety is complete. It allows to synthesize pimeloyl-ACP via the fatty acid synthetic pathway through the hydrolysis of the ester bonds of pimeloyl-ACP esters. This chain is Pimeloyl-[acyl-carrier protein] methyl ester esterase, found in Wigglesworthia glossinidia brevipalpis.